The sequence spans 137 residues: Protein ApaG (137 aa).

In terms of domain architecture, ApaG spans 2–126 (PKYQFQVQVQ…FVLEAFSPGQ (125 aa)).

This is Protein ApaG from Acidovorax sp. (strain JS42).